We begin with the raw amino-acid sequence, 253 residues long: Indole-3-glycerol phosphate synthase (253 aa).

This sequence belongs to the TrpC family.

The enzyme catalyses 1-(2-carboxyphenylamino)-1-deoxy-D-ribulose 5-phosphate + H(+) = (1S,2R)-1-C-(indol-3-yl)glycerol 3-phosphate + CO2 + H2O. It functions in the pathway amino-acid biosynthesis; L-tryptophan biosynthesis; L-tryptophan from chorismate: step 4/5. In Petrotoga mobilis (strain DSM 10674 / SJ95), this protein is Indole-3-glycerol phosphate synthase.